The chain runs to 618 residues: Uptake hydrogenase large subunit (618 aa).

Ni(2+) is bound by residues C75, C78, C597, and C600.

Belongs to the [NiFe]/[NiFeSe] hydrogenase large subunit family. Heterodimer of a large and a small subunit. Requires Ni(2+) as cofactor.

Its subcellular location is the cell membrane. The enzyme catalyses H2 + A = AH2. In terms of biological role, this enzyme recycles the H(2) produced by nitrogenase to increase the production of ATP and to protect nitrogenase against inhibition or damage by O(2) under carbon- or phosphate-limited conditions. This is Uptake hydrogenase large subunit (hupB) from Rubrivivax gelatinosus (Rhodocyclus gelatinosus).